Consider the following 201-residue polypeptide: Putative 3-methyladenine DNA glycosylase (201 aa).

Belongs to the DNA glycosylase MPG family.

The sequence is that of Putative 3-methyladenine DNA glycosylase from Rhodopseudomonas palustris (strain HaA2).